The chain runs to 208 residues: Small ribosomal subunit protein eS8 (208 aa).

Residues 1–27 are disordered; the sequence is MGISRDNWHKRRRTGGKRKPVHKKRKY. Basic residues predominate over residues 8–26; that stretch reads WHKRRRTGGKRKPVHKKRK.

This sequence belongs to the eukaryotic ribosomal protein eS8 family. In terms of assembly, component of the small ribosomal subunit. Identified in a IGF2BP1-dependent mRNP granule complex containing untranslated mRNAs. Part of the small subunit (SSU) processome, composed of more than 70 proteins and the RNA chaperone small nucleolar RNA (snoRNA) U3.

It localises to the cytoplasm. The protein localises to the membrane. The protein resides in the nucleus. It is found in the nucleolus. Its function is as follows. Component of the small ribosomal subunit. The ribosome is a large ribonucleoprotein complex responsible for the synthesis of proteins in the cell. Part of the small subunit (SSU) processome, first precursor of the small eukaryotic ribosomal subunit. During the assembly of the SSU processome in the nucleolus, many ribosome biogenesis factors, an RNA chaperone and ribosomal proteins associate with the nascent pre-rRNA and work in concert to generate RNA folding, modifications, rearrangements and cleavage as well as targeted degradation of pre-ribosomal RNA by the RNA exosome. In Danio rerio (Zebrafish), this protein is Small ribosomal subunit protein eS8 (rps8).